The following is a 250-amino-acid chain: UPF0736 protein RBAM_011410 (250 aa).

Belongs to the UPF0736 family.

The chain is UPF0736 protein RBAM_011410 from Bacillus velezensis (strain DSM 23117 / BGSC 10A6 / LMG 26770 / FZB42) (Bacillus amyloliquefaciens subsp. plantarum).